A 193-amino-acid chain; its full sequence is Ion-translocating oxidoreductase complex subunit A (193 aa).

A run of 6 helical transmembrane segments spans residues Leu5–Leu25, Met39–Ile59, Ile63–Val83, Leu102–Leu122, Ala134–Ile154, and Ala171–Val191.

This sequence belongs to the NqrDE/RnfAE family. In terms of assembly, the complex is composed of six subunits: RsxA, RsxB, RsxC, RsxD, RsxE and RsxG.

The protein resides in the cell inner membrane. Its function is as follows. Part of a membrane-bound complex that couples electron transfer with translocation of ions across the membrane. Required to maintain the reduced state of SoxR. In Shigella flexneri serotype 5b (strain 8401), this protein is Ion-translocating oxidoreductase complex subunit A.